The chain runs to 151 residues: Homeobox protein HD-1 (151 aa).

The homeobox DNA-binding region spans 87–146 (ESIKSRRFPKFITEALERSFEIDQYPSEAEKARLAKICKLSTKQINNWFTNKRNRTKGHE).

The protein localises to the nucleus. The sequence is that of Homeobox protein HD-1 (HD-1) from Encephalitozoon cuniculi (strain GB-M1) (Microsporidian parasite).